The sequence spans 490 residues: GTPase Der (490 aa).

The region spanning 1-165 is the EngA-type G 1 domain; sequence MRIAILGRPN…RIRQVAEIPL (165 aa). GTP is bound by residues 7–14, 54–58, and 117–120; these read GRPNVGKS, DTGGV, and NKAD. Positions 165–184 are disordered; sequence LPSAEEQENTQEEEFSSKES. Residues 169 to 178 are compositionally biased toward acidic residues; that stretch reads EEQENTQEEE. Residues 227–400 form the EngA-type G 2 domain; sequence LKVALIGHPN…AVDDVYTIAT (174 aa). Residues 233–240, 280–284, and 345–348 contribute to the GTP site; these read GHPNVGKS, DTAGL, and NKWD. In terms of domain architecture, KH-like spans 401 to 485; it reads TKLSTSLVNK…PFDLEYKAKP (85 aa).

Belongs to the TRAFAC class TrmE-Era-EngA-EngB-Septin-like GTPase superfamily. EngA (Der) GTPase family. As to quaternary structure, associates with the 50S ribosomal subunit.

GTPase that plays an essential role in the late steps of ribosome biogenesis. This is GTPase Der from Chlamydia muridarum (strain MoPn / Nigg).